A 251-amino-acid chain; its full sequence is uncharacterized protein (251 aa).

The region spanning 3–118 is the Response regulatory domain; the sequence is KVVICDDERI…QLEHILDILV (116 aa). Asp-55 carries the post-translational modification 4-aspartylphosphate. One can recognise an HTH araC/xylS-type domain in the interval 152 to 249; the sequence is NQILSQIKQH…HMSPSDYNKL (98 aa). 2 DNA-binding regions (H-T-H motif) span residues 169-190 and 216-239; these read LDLINPIVVSESYAMRTFKEHV and HYEIAEKVGFSEYKMFCYHFKKYL.

Post-translationally, phosphorylated by SE_0166.

The protein localises to the cytoplasm. Functionally, probable member of the two-component regulatory system SE_0166/SE_0165. This is an uncharacterized protein from Staphylococcus epidermidis (strain ATCC 12228 / FDA PCI 1200).